The sequence spans 344 residues: Gas vesicle ATPase GvpN2 (344 aa).

The interval 1–55 (MTDTSRNRKVRGSKIRSSRSDKRQSRGSEDKELKRLADARDTDSEQAGDRVGDAF) is disordered. The segment covering 7–17 (NRKVRGSKIRS) has biased composition (basic residues). Basic and acidic residues predominate over residues 18-52 (SRSDKRQSRGSEDKELKRLADARDTDSEQAGDRVG). 89 to 96 (GPTGCGKT) contributes to the ATP binding site.

The protein belongs to the CbbQ/NirQ/NorQ/GpvN family. As to quaternary structure, forms homodimers, a GvpN-GvpO heterodimer, interacts with GvpC and GvpL, might interact with GvpA.

It is found in the gas vesicle. The protein resides in the cytoplasm. It catalyses the reaction ATP + H2O = ADP + phosphate + H(+). In terms of biological role, an ATPase that functions in gas vesicle formation. A minor component of the gas vesicle, also found in soluble extracts. Gas vesicles are hollow, gas filled proteinaceous nanostructures found in several microbial planktonic microorganisms. They allow positioning of halobacteria at the optimal depth for growth in the poorly aerated, shallow brine pools of their habitat. Its function is as follows. Expression of 2 c-vac DNA fragments containing 2 divergently transcribed regions (gvpE-gvpF-gvpG-gvpH-gvpI-gvpJ-gvpK-gvpL-gvpM and gvpA-gvpC-gvpN-gvpO) allows H.volcanii to produce gas vesicles. The chain is Gas vesicle ATPase GvpN2 from Halobacterium salinarum (strain ATCC 700922 / JCM 11081 / NRC-1) (Halobacterium halobium).